Reading from the N-terminus, the 284-residue chain is Bifunctional protein FolD (284 aa).

NADP(+)-binding positions include 165–167, S190, and I231; that span reads GAS.

This sequence belongs to the tetrahydrofolate dehydrogenase/cyclohydrolase family. As to quaternary structure, homodimer.

The enzyme catalyses (6R)-5,10-methylene-5,6,7,8-tetrahydrofolate + NADP(+) = (6R)-5,10-methenyltetrahydrofolate + NADPH. It carries out the reaction (6R)-5,10-methenyltetrahydrofolate + H2O = (6R)-10-formyltetrahydrofolate + H(+). Its pathway is one-carbon metabolism; tetrahydrofolate interconversion. Catalyzes the oxidation of 5,10-methylenetetrahydrofolate to 5,10-methenyltetrahydrofolate and then the hydrolysis of 5,10-methenyltetrahydrofolate to 10-formyltetrahydrofolate. In Polynucleobacter necessarius subsp. necessarius (strain STIR1), this protein is Bifunctional protein FolD.